The primary structure comprises 233 residues: Glucosamine-6-phosphate deaminase (233 aa).

Aspartate 62 (proton acceptor; for enolization step) is an active-site residue. Residue asparagine 128 is the For ring-opening step of the active site. Histidine 130 serves as the catalytic Proton acceptor; for ring-opening step. Glutamate 135 functions as the For ring-opening step in the catalytic mechanism.

The protein belongs to the glucosamine/galactosamine-6-phosphate isomerase family. NagB subfamily.

It carries out the reaction alpha-D-glucosamine 6-phosphate + H2O = beta-D-fructose 6-phosphate + NH4(+). Its pathway is amino-sugar metabolism; N-acetylneuraminate degradation; D-fructose 6-phosphate from N-acetylneuraminate: step 5/5. In terms of biological role, catalyzes the reversible isomerization-deamination of glucosamine 6-phosphate (GlcN6P) to form fructose 6-phosphate (Fru6P) and ammonium ion. In Streptococcus pneumoniae serotype 4 (strain ATCC BAA-334 / TIGR4), this protein is Glucosamine-6-phosphate deaminase.